Consider the following 245-residue polypeptide: Ribonuclease P protein component 3 (245 aa).

The protein belongs to the eukaryotic/archaeal RNase P protein component 3 family. In terms of assembly, consists of a catalytic RNA component and at least 4-5 protein subunits.

The protein resides in the cytoplasm. It catalyses the reaction Endonucleolytic cleavage of RNA, removing 5'-extranucleotides from tRNA precursor.. In terms of biological role, part of ribonuclease P, a protein complex that generates mature tRNA molecules by cleaving their 5'-ends. This is Ribonuclease P protein component 3 from Methanothermobacter thermautotrophicus (strain ATCC 29096 / DSM 1053 / JCM 10044 / NBRC 100330 / Delta H) (Methanobacterium thermoautotrophicum).